A 230-amino-acid polypeptide reads, in one-letter code: Ribose-5-phosphate isomerase A (230 aa).

Substrate is bound by residues 29–32 (TGST), 85–88 (DGAD), and 99–102 (KGAG). Catalysis depends on glutamate 108, which acts as the Proton acceptor. Lysine 126 lines the substrate pocket.

The protein belongs to the ribose 5-phosphate isomerase family. Homodimer.

It catalyses the reaction aldehydo-D-ribose 5-phosphate = D-ribulose 5-phosphate. Its pathway is carbohydrate degradation; pentose phosphate pathway; D-ribose 5-phosphate from D-ribulose 5-phosphate (non-oxidative stage): step 1/1. In terms of biological role, catalyzes the reversible conversion of ribose-5-phosphate to ribulose 5-phosphate. The chain is Ribose-5-phosphate isomerase A from Synechococcus sp. (strain JA-3-3Ab) (Cyanobacteria bacterium Yellowstone A-Prime).